Reading from the N-terminus, the 461-residue chain is Cysteine--tRNA ligase (461 aa).

Cys30 contacts Zn(2+). The short motif at 32–42 (VTVYDLCHIGH) is the 'HIGH' region element. Residues Cys211, His236, and Glu240 each contribute to the Zn(2+) site. A 'KMSKS' region motif is present at residues 268–272 (KMSKS). Residue Lys271 coordinates ATP.

This sequence belongs to the class-I aminoacyl-tRNA synthetase family. In terms of assembly, monomer. It depends on Zn(2+) as a cofactor.

The protein localises to the cytoplasm. The catalysed reaction is tRNA(Cys) + L-cysteine + ATP = L-cysteinyl-tRNA(Cys) + AMP + diphosphate. The chain is Cysteine--tRNA ligase from Shewanella sp. (strain MR-4).